Consider the following 179-residue polypeptide: SADVAGAVIDGAGLGFDVLKTVLEALGNVKRKIAVGIDNESGKTWTAMNTYFRSGTSDIVLPHKVAHGKALLYNGQKNRGPVATGVVGVIAYSMSDGNTLAVLFSVPYDYNWYSNWWNVRVYKGQKRADQRMYEELYYHRSPFRGDNGWHSRGLGYGLKSRGFMNSSGHAILEIHVTKA.

The interval 1–29 (SADVAGAVIDGAGLGFDVLKTVLEALGNV) is N-terminal alpha-helix that contributes to the pore. An an N-(acyl)-sphingosylphosphocholine-binding site is contributed by arginine 31. Residues tyrosine 51 and arginine 53 each contribute to the N-acetyl-D-glucosamine 6-sulfate site. Arginine 53, serine 54, arginine 79, glycine 85, tyrosine 108, tyrosine 113, serine 114, tryptophan 116, tyrosine 133, tyrosine 137, tyrosine 138, arginine 144, and glycine 168 together coordinate an N-(acyl)-sphingosylphosphocholine. Residues 105–120 (SVPYDYNWYSNWWNVR) are trp-rich region, which is important for the binding to lipid membrane. Tyrosine 138 lines the N-acetyl-D-glucosamine 6-sulfate pocket. The Cell attachment site, crucial for protein stability motif lies at 144–146 (RGD).

The protein belongs to the actinoporin family. Sea anemone subfamily. In terms of assembly, octamer or nonamer in membranes. Monomer in the soluble state.

The protein resides in the secreted. It localises to the nematocyst. The protein localises to the target cell membrane. Its function is as follows. Pore-forming toxin (PFT) that consists of a crown-shaped octamer or nonamer that forms cation-selective hydrophilic pores of about 1.5 nm (inside) and 13 nm (outside). It causes cardiac stimulation and cytolysis (EC(50)=1.6 nM on erythrocytes). Interestingly, the Phe-16 is crucial for hemolysis. Pore formation is a multi-step process that involves specific recognition of membrane sphingomyelin (but neither cholesterol nor phosphatidylcholine) using aromatic rich region and adjacent phosphocholine (POC) binding site, firm binding to the membrane (mainly driven by hydrophobic interactions) accompanied by the transfer of the N-terminal region to the lipid-water interface and finally pore formation after oligomerization of monomers. It is probable that a dimeric form is an assembly intermediate before the complete oligomerization. The formation of stable pores occurs only in vesicles composed of DOPC/SM (there is no oligomerization when the PFT is treated with vesicles of DOPC or SM alone). The transmembrane pore displays 8 lateral perforations, one at each subunit-subunit interface, partially occupied by the acyl-chain region of a bridging lipid. Each pore contains 24 lipid molecules, firmly bound to each subunit, that is, 3 lipids (L1, L2, L3, L4 and/or L5) are associated to each subunit. Lipid L1 bridges 2 subunits, whereas lipids L2 and L3 bind to sites at single subunit. The chain is DELTA-actitoxin-Afr1a from Actinia fragacea (Strawberry anemone).